Reading from the N-terminus, the 177-residue chain is Parathyroid hormone-related protein (177 aa).

A signal peptide spans 1-24 (MLRRLVQQWSVLVFLLSYSVPSRG). Residues 25–34 (RSVEGLGRRL) constitute a propeptide that is removed on maturation. Residues 57-68 (RFFLHHLIAEIH) form an important for receptor binding region. Residues 74–177 (ATSEVSPNSK…TSLEPSSRTH (104 aa)) are disordered. Residues 76-90 (SEVSPNSKPAPNTKN) show a composition bias toward polar residues. A Nuclear localization signal motif is present at residues 108 to 129 (TNKVETYKEQPLKTPGKKKKGK). Residues 109 to 118 (NKVETYKEQP) are compositionally biased toward basic and acidic residues. Residues 122-132 (PGKKKKGKPGK) are compositionally biased toward basic residues. Low complexity predominate over residues 161–177 (PHTSPTSTSLEPSSRTH).

Belongs to the parathyroid hormone family. As to quaternary structure, PTHrP interacts with PTH1R (via N-terminal extracellular domain). Post-translationally, there are several secretory forms, including osteostatin, arising from endoproteolytic cleavage of the initial translation product. Each of these secretory forms is believed to have one or more of its own receptors that mediates the normal paracrine, autocrine and endocrine actions.

The protein localises to the secreted. The protein resides in the cytoplasm. It is found in the nucleus. Functionally, neuroendocrine peptide which is a critical regulator of cellular and organ growth, development, migration, differentiation and survival and of epithelial calcium ion transport. Acts by binding to its receptor, PTH1R, activating G protein-coupled receptor signaling. Regulates endochondral bone development and epithelial-mesenchymal interactions during the formation of the mammary glands and teeth. Required for skeletal homeostasis. Promotes mammary mesenchyme differentiation and bud outgrowth by modulating mesenchymal cell responsiveness to BMPs. Up-regulates BMPR1A expression in the mammary mesenchyme and this increases the sensitivity of these cells to BMPs and allows them to respond to BMP4 in a paracrine and/or autocrine fashion. BMP4 signaling in the mesenchyme, in turn, triggers epithelial outgrowth and augments MSX2 expression, which causes the mammary mesenchyme to inhibit hair follicle formation within the nipple sheath. In terms of biological role, potent inhibitor of osteoclastic bone resorption. This Rattus norvegicus (Rat) protein is Parathyroid hormone-related protein (Pthlh).